Consider the following 146-residue polypeptide: MKIKLEIKRLPHGANLPFPSYASEGAAGMDVVSAEDVILQPMQRYPVKTGFAVAIPNGYEIQVRARSGLALKHGIACPNAPGTIDSDYRGEVKILLINLGSEAFEIKRGDRIAQLILASVTQAVFCEVTDLDDTQRGHNGFGSTGI.

Residues 66–68 (RSG), Asn79, 83–85 (TID), and Lys93 contribute to the substrate site.

It belongs to the dUTPase family. Mg(2+) serves as cofactor.

The catalysed reaction is dUTP + H2O = dUMP + diphosphate + H(+). It participates in pyrimidine metabolism; dUMP biosynthesis; dUMP from dCTP (dUTP route): step 2/2. In terms of biological role, this enzyme is involved in nucleotide metabolism: it produces dUMP, the immediate precursor of thymidine nucleotides and it decreases the intracellular concentration of dUTP so that uracil cannot be incorporated into DNA. This chain is Deoxyuridine 5'-triphosphate nucleotidohydrolase, found in Zymomonas mobilis subsp. mobilis (strain ATCC 31821 / ZM4 / CP4).